The following is a 674-amino-acid chain: Polyunsaturated fatty acid 5-lipoxygenase (674 aa).

A PLAT domain is found at 2–118; sequence PSYTVTVATG…EIVLRDGRAK (117 aa). Positions 17, 18, 19, 44, 45, 47, 79, and 80 each coordinate Ca(2+). In terms of domain architecture, Lipoxygenase spans 119–674; sequence LARDDQIHIL…PDRIPNSVAI (556 aa). Serine 272 bears the Phosphoserine mark. Positions 368 and 373 each coordinate Fe cation. Phosphoserine is present on serine 524. Histidine 551, asparagine 555, and isoleucine 674 together coordinate Fe cation.

This sequence belongs to the lipoxygenase family. Homodimer. Interacts with ALOX5AP and LTC4S. Interacts with COTL1, the interaction is required for stability and efficient catalytic activity. Interacts with PIK3R1; this interaction bridges ALOX5 with CD40 after CD40 ligation in B cells and leads to the production of reactive oxygen species (ROS). Interacts (via PLAT domain) with DICER1 (via Dicer dsRNA-binding fold domain); this interaction enhances arachidonate 5-lipoxygenase activity and modifies the miRNA precursor processing activity of DICER1. Requires Fe cation as cofactor. Serine phosphorylation by MAPKAPK2 is stimulated by arachidonic acid. Phosphorylation on Ser-524 by PKA has an inhibitory effect. Phosphorylation on Ser-272 prevents export from the nucleus. Phosphorylation at Ser-524 is stimulated by 8-bromo-3',5'-cyclic AMP or prostaglandin E2. As to expression, expressed in skin Langerhans cells and their emigrated counterparts in draining lymph nodes. Highly expressed in circulating leukocytes.

It is found in the cytoplasm. It localises to the nucleus matrix. Its subcellular location is the nucleus membrane. The protein localises to the perinuclear region. The protein resides in the cytosol. It is found in the nucleus envelope. It localises to the nucleus intermembrane space. It carries out the reaction (5Z,8Z,11Z,14Z)-eicosatetraenoate + O2 = (5S)-hydroperoxy-(6E,8Z,11Z,14Z)-eicosatetraenoate. The enzyme catalyses (5Z,8Z,11Z,14Z)-eicosatetraenoate + O2 = leukotriene A4 + H2O. The catalysed reaction is (5Z,8Z,11Z,14Z)-eicosatetraenoate + O2 = (8S)-hydroperoxy-(5Z,9E,11Z,14Z)-eicosatetraenoate. It catalyses the reaction (5Z,8Z,11Z,14Z)-eicosatetraenoate + O2 = (12S)-hydroperoxy-(5Z,8Z,10E,14Z)-eicosatetraenoate. It carries out the reaction 18-HEPE + O2 = (5S)-hydroperoxy-18-hydroxy-(7E,9E,11Z,14Z,16E)-eicosapentaenoate. The enzyme catalyses (18R)-hydroxy-(5Z,8Z,11Z,14Z,16E)-eicosapentaenoate + O2 = (5S)-hydroperoxy-(18R)-hydroxy-(6E,8Z,11Z,14Z,16E)-eicosapentaenoate. The catalysed reaction is (18S)-hydroxy-(5Z,8Z,11Z,14Z,16E)-eicosapentaenoate + O2 = (5S)-hydroperoxy-(18S)-hydroxy-(6E,8Z,11Z,14Z,16E)-eicosapentaenoate. It catalyses the reaction (5S)-hydroperoxy-(18S)-hydroxy-(6E,8Z,11Z,14Z,16E)-eicosapentaenoate = (5S,6S)-epoxy-(18S)-hydroxy-(7E,9E,11Z,14Z,16E)-eicosapentaenoate + H2O. It carries out the reaction (5S)-hydroperoxy-(18R)-hydroxy-(6E,8Z,11Z,14Z,16E)-eicosapentaenoate = (5S,6S)-epoxy-(18R)-hydroxy-(7E,9E,11Z,14Z,16E)-eicosapentaenoate + H2O. The enzyme catalyses (5S)-hydroperoxy-18-hydroxy-(7E,9E,11Z,14Z,16E)-eicosapentaenoate = (5S,6S)-epoxy-18-hydroxy-(7E,9E,11Z,14Z,16E)-eicosapentaenoate + H2O. The catalysed reaction is (15S)-hydroxy-(5Z,8Z,11Z,13E)-eicosatetraenoate + O2 = (5S)-hydroperoxy-(15S)-hydroxy-(6E,8Z,11Z,13E)-eicosatetraenoate. It catalyses the reaction (5S)-hydroperoxy-(6E,8Z,11Z,14Z)-eicosatetraenoate = leukotriene A4 + H2O. It carries out the reaction (5Z,8Z)-eicosadienoate + O2 = (5S)-hydroperoxy-(6E,8Z)-eicosadienoate. The enzyme catalyses (12S)-hydroxy-(5Z,8Z,10E,14Z)-eicosatetraenoate + O2 = (5S)-hydroperoxy-(12S)-hydroxy-(6E,8Z,10E,14Z)-eicosatetraenoate. The catalysed reaction is (5Z,8Z,11Z,14Z,17Z)-eicosapentaenoate + O2 = 5-hydroperoxy-(6E,8Z,11Z,14Z,17Z)-eicosapentaenoate. It catalyses the reaction (4Z,7Z,10Z,13Z,16Z,19Z)-docosahexaenoate + O2 = (14S)-hydroperoxy-(4Z,7Z,10Z,12E,16Z,19Z)-docosahexaenoate. It carries out the reaction (4Z,7Z,10Z,13Z,16Z,19Z)-docosahexaenoate + O2 = (7S)-hydroperoxy-(4Z,8E,10Z,13Z,16Z,19Z)-docosahexaenoate. The enzyme catalyses (4Z,7Z,10Z,13Z,16Z,19Z)-docosahexaenoate + O2 = (17S)-hydroperoxy-(4Z,7Z,10Z,13Z,15E,19Z)-docosahexaenoate. Its pathway is lipid metabolism; leukotriene A4 biosynthesis. Functionally, catalyzes the oxygenation of arachidonate to 5-hydroperoxyeicosatetraenoate (5-HPETE) followed by the dehydration to 5,6- epoxyeicosatetraenoate (Leukotriene A4/LTA4), the first two steps in the biosynthesis of leukotrienes, which are potent mediators of inflammation. Also catalyzes the oxygenation of arachidonic acid into 8-hydroperoxyicosatetraenoic acid (8-HPETE) and 12-hydroperoxyicosatetraenoic acid (12-HPETE). Displays lipoxin synthase activity being able to convert (15S)-HETE into a conjugate tetraene. Although arachidonate is the preferred substrate, this enzyme can also metabolize oxidized fatty acids derived from arachidonate such as (15S)-HETE, eicosapentaenoate (EPA) such as (18R)- and (18S)-HEPE or docosahexaenoate (DHA) which lead to the formation of specialized pro-resolving mediators (SPM) lipoxin and resolvins E and D respectively, therefore it participates in anti-inflammatory responses. Oxidation of DHA directly inhibits endothelial cell proliferation and sprouting angiogenesis via peroxisome proliferator-activated receptor gamma (PPARgamma). It does not catalyze the oxygenation of linoleic acid and does not convert (5S)-HETE to lipoxin isomers. In addition to inflammatory processes, participates in dendritic cell migration, wound healing through an antioxidant mechanism based on heme oxygenase-1 (HO-1) regulation expression, monocyte adhesion to the endothelium via ITGAM expression on monocytes. Moreover, it helps establish an adaptive humoral immunity by regulating primary resting B cells and follicular helper T cells and participates in the CD40-induced production of reactive oxygen species (ROS) after CD40 ligation in B cells through interaction with PIK3R1 that bridges ALOX5 with CD40. May also play a role in glucose homeostasis, regulation of insulin secretion and palmitic acid-induced insulin resistance via AMPK. Can regulate bone mineralization and fat cell differentiation increases in induced pluripotent stem cells. In Mus musculus (Mouse), this protein is Polyunsaturated fatty acid 5-lipoxygenase.